Here is a 214-residue protein sequence, read N- to C-terminus: Hypoxanthine-guanine phosphoribosyltransferase (214 aa).

N-acetylalanine is present on Ala2. Lys69 contacts GMP. Lys103 carries the post-translational modification N6-acetyllysine. Lys115 participates in a covalent cross-link: Glycyl lysine isopeptide (Lys-Gly) (interchain with G-Cter in SUMO1); alternate. Residue Lys115 forms a Glycyl lysine isopeptide (Lys-Gly) (interchain with G-Cter in SUMO2); alternate linkage. Residues 134-142, Lys166, 186-188, and Asp194 each bind GMP; these read EDIIDTGKT and KFV. Asp138 (proton acceptor) is an active-site residue. A Phosphothreonine modification is found at Thr142. Asp194 lines the Mg(2+) pocket.

Belongs to the purine/pyrimidine phosphoribosyltransferase family. As to quaternary structure, homotetramer. The cofactor is Mg(2+).

It is found in the cytoplasm. The enzyme catalyses IMP + diphosphate = hypoxanthine + 5-phospho-alpha-D-ribose 1-diphosphate. The catalysed reaction is GMP + diphosphate = guanine + 5-phospho-alpha-D-ribose 1-diphosphate. The protein operates within purine metabolism; IMP biosynthesis via salvage pathway; IMP from hypoxanthine: step 1/1. Functionally, converts guanine to guanosine monophosphate, and hypoxanthine to inosine monophosphate. Transfers the 5-phosphoribosyl group from 5-phosphoribosylpyrophosphate onto the purine. Plays a central role in the generation of purine nucleotides through the purine salvage pathway. The chain is Hypoxanthine-guanine phosphoribosyltransferase (Hprt1) from Mus spretus (Western Mediterranean mouse).